The chain runs to 351 residues: Nicotinate-nucleotide--dimethylbenzimidazole phosphoribosyltransferase (351 aa).

Residue glutamate 317 is the Proton acceptor of the active site.

Belongs to the CobT family.

The catalysed reaction is 5,6-dimethylbenzimidazole + nicotinate beta-D-ribonucleotide = alpha-ribazole 5'-phosphate + nicotinate + H(+). Its pathway is nucleoside biosynthesis; alpha-ribazole biosynthesis; alpha-ribazole from 5,6-dimethylbenzimidazole: step 1/2. In terms of biological role, catalyzes the synthesis of alpha-ribazole-5'-phosphate from nicotinate mononucleotide (NAMN) and 5,6-dimethylbenzimidazole (DMB). This Ectopseudomonas mendocina (strain ymp) (Pseudomonas mendocina) protein is Nicotinate-nucleotide--dimethylbenzimidazole phosphoribosyltransferase.